We begin with the raw amino-acid sequence, 553 residues long: Neutral amino acid transporter B(0) (553 aa).

Residue Met1 is modified to N-acetylmethionine. The Cytoplasmic segment spans residues 1–50 (MAVDPPKADPKGVAVDSSRRCPALGSREDQSAKAGGCCGSRDRVRRCIRA). Residues 51–80 (NLLVLLTVAAVVAGVGLGLGVSAAGGADAL) traverse the membrane as a helical segment. Residues 81 to 93 (GPARLTRFAFPGE) lie on the Extracellular side of the membrane. The helical transmembrane segment at 94–115 (LLLRLLKMIILPLVVCSLIGGA) threads the bilayer. Residues 116–129 (ASLDPSALGRVGAW) lie on the Cytoplasmic side of the membrane. The chain crosses the membrane as a helical span at residues 130-152 (ALLFFLVTTLLASALGVGLALAL). The Extracellular segment spans residues 153 to 236 (KPGAAVTAIT…INSTMVQLLC (84 aa)). 2 N-linked (GlcNAc...) asparagine glycosylation sites follow: Asn165 and Asn228. The chain crosses the membrane as a helical span at residues 237 to 260 (EVEGMNILGLVVFAIVFGVALRKL). Topologically, residues 261–269 (GPEGELLIR) are cytoplasmic. Residues 270–297 (FFNSFNDATMVLVSWIMWYAPVGILFLV) form a helical membrane-spanning segment. The Extracellular segment spans residues 298–318 (ASKIVEMKDVRQLFISLGKYI). Residues 319–340 (LCCLLGHAIHGLLVLPLIYFLF) traverse the membrane as a helical segment. Over 341 to 345 (TRKNP) the chain is Cytoplasmic. The discontinuously helical intramembrane region spans 346–376 (YRFLWGIMTPLATAFGTSSSSATLPLMMKCV). Topologically, residues 377 to 385 (EEKNGVAKH) are cytoplasmic. The chain crosses the membrane as a helical span at residues 386-412 (ISRFILPIGATVNMDGAALFQCVAAVF). Na(+)-binding residues include Gly394, Thr396, and Asn398. Residues 413–425 (IAQLNGVSLDFVK) lie on the Extracellular side of the membrane. The segment at residues 426–459 (IITILVTATASSVGAAGIPAGGVLTLAIILEAVS) is an intramembrane region (discontinuously helical). Residues 460-472 (LPVKDISLILAVD) are Extracellular-facing. A helical transmembrane segment spans residues 473–494 (WLVDRSCTVLNVEGDAFGAGLL). Positions 483 and 487 each coordinate Na(+). Over 495–553 (QSYVDRTKMPSSEPELIQVKNEVSLNPLPLATEEGNPLLKQYQGPTGDSSATFEKESVM) the chain is Cytoplasmic. Phosphoserine occurs at positions 505, 506, 518, 543, and 551. A disordered region spans residues 531–553 (PLLKQYQGPTGDSSATFEKESVM). Over residues 537–546 (QGPTGDSSAT) the composition is skewed to polar residues.

Belongs to the dicarboxylate/amino acid:cation symporter (DAACS) (TC 2.A.23) family. SLC1A5 subfamily. As to quaternary structure, homotrimer. In terms of tissue distribution, highly expressed in adipose tissue. Detected in lung, skeletal muscle, large intestine, kidney and testis. Expressed in lung, brain, kidney and neural retina (at protein level). Expressed in Mueller cells (at protein level).

The protein localises to the cell membrane. The protein resides in the melanosome. It carries out the reaction L-glutamine(out) + L-serine(in) + Na(+)(out) = L-glutamine(in) + L-serine(out) + Na(+)(in). The enzyme catalyses L-glutamine(in) + L-serine(out) + Na(+)(out) = L-glutamine(out) + L-serine(in) + Na(+)(in). It catalyses the reaction L-threonine(in) + L-glutamine(out) + Na(+)(out) = L-threonine(out) + L-glutamine(in) + Na(+)(in). The catalysed reaction is L-threonine(out) + L-glutamine(in) + Na(+)(out) = L-threonine(in) + L-glutamine(out) + Na(+)(in). It carries out the reaction L-asparagine(in) + L-glutamine(out) + Na(+)(out) = L-asparagine(out) + L-glutamine(in) + Na(+)(in). The enzyme catalyses L-asparagine(out) + L-glutamine(in) + Na(+)(out) = L-asparagine(in) + L-glutamine(out) + Na(+)(in). It catalyses the reaction L-glutamine(in) + L-alanine(out) + Na(+)(out) = L-glutamine(out) + L-alanine(in) + Na(+)(in). The catalysed reaction is L-valine(out) + L-glutamine(in) + Na(+)(out) = L-valine(in) + L-glutamine(out) + Na(+)(in). It carries out the reaction L-glutamine(in) + L-methionine(out) + Na(+)(out) = L-glutamine(out) + L-methionine(in) + Na(+)(in). The enzyme catalyses L-glutamine(in) + L-glutamate(out) + Na(+)(out) + H(+)(out) = L-glutamine(out) + L-glutamate(in) + Na(+)(in) + H(+)(in). It catalyses the reaction D-serine(in) + L-glutamine(out) + Na(+)(out) = D-serine(out) + L-glutamine(in) + Na(+)(in). The catalysed reaction is D-serine(in) + L-alanine(out) + Na(+)(out) = D-serine(out) + L-alanine(in) + Na(+)(in). It carries out the reaction nitrate(in) = nitrate(out). The enzyme catalyses iodide(out) = iodide(in). It catalyses the reaction thiocyanate(in) = thiocyanate(out). Down-regulated at acidic pH, with the exception of L-glutamate transport which is up-regulated instead. In terms of biological role, sodium-coupled antiporter of neutral amino acids. In a tri-substrate transport cycle, exchanges neutral amino acids between the extracellular and intracellular compartments, coupled to the inward cotransport of at least one sodium ion. The preferred substrate is the essential amino acid L-glutamine, a precursor for biosynthesis of proteins, nucleotides and amine sugars as well as an alternative fuel for mitochondrial oxidative phosphorylation. Exchanges L-glutamine with other neutral amino acids such as L-serine, L-threonine and L-asparagine in a bidirectional way. Provides L-glutamine to proliferating stem and activated cells driving the metabolic switch toward cell differentiation. The transport cycle is usually pH-independent, with the exception of L-glutamate. Transports extracellular L-glutamate coupled to the cotransport of one proton and one sodium ion in exchange for intracellular L-glutamine counter-ion. May provide for L-glutamate uptake in glial cells regulating glutamine/glutamate cycle in the nervous system. Can transport D-amino acids. Mediates D-serine release from the retinal glia potentially affecting NMDA receptor function in retinal neurons. Displays sodium- and amino acid-dependent but uncoupled channel-like anion conductance with a preference SCN(-) &gt;&gt; NO3(-) &gt; I(-) &gt; Cl(-). Through binding of the fusogenic protein syncytin-1/ERVW-1 may mediate trophoblasts syncytialization, the spontaneous fusion of their plasma membranes, an essential process in placental development. This is Neutral amino acid transporter B(0) (Slc1a5) from Mus musculus (Mouse).